Consider the following 149-residue polypeptide: Gamma-glutamylaminecyclotransferase (149 aa).

7-10 (YGTL) is a binding site for substrate. The Proton acceptor role is filled by glutamate 82.

It belongs to the gamma-glutamylcyclotransferase family. In terms of assembly, monomer.

The enzyme catalyses epsilon-(gamma-L-glutamyl)-L-lysine = 5-oxo-L-proline + L-lysine. In terms of biological role, contributes to degradation of proteins cross-linked by transglutaminases by degrading the cross-link between a lysine and a glutamic acid residue. Catalyzes the formation of 5-oxo-L-proline from L-gamma-glutamyl-L-epsilon-lysine. Inactive with L-gamma-glutamyl-alpha-amino acid substrates such as L-gamma-glutamyl-L-alpha-cysteine and L-gamma-glutamyl-L-alpha-alanine. In Rattus norvegicus (Rat), this protein is Gamma-glutamylaminecyclotransferase (Ggact).